Consider the following 270-residue polypeptide: Large ribosomal subunit protein bL21m (270 aa).

The transit peptide at 1 to 68 (MASLRCFREL…HWYRSQDRCF (68 aa)) directs the protein to the mitochondrion. A disordered region spans residues 68–113 (FSSNTKDTDEDEESSEGEDDDEEEGEDFEDSADMEVEREYSPAEKV). Residues 75 to 101 (TDEDEESSEGEDDDEEEGEDFEDSADM) are compositionally biased toward acidic residues. The span at 102 to 113 (EVEREYSPAEKV) shows a compositional bias: basic and acidic residues.

This sequence belongs to the bacterial ribosomal protein bL21 family. As to quaternary structure, component of the mitochondrial ribosome large subunit. In terms of tissue distribution, constitutively expressed in roots, stems, leaves, flowers, pistils and siliques.

It is found in the mitochondrion. Its function is as follows. This protein binds to 23S ribosomal RNA in the presence of protein L20. Required for karyogamy during female gametophyte development, when the two polar nuclei fuse to form the diploid central cell nucleus, and during double fertilization of the egg cell and the central cell. The polypeptide is Large ribosomal subunit protein bL21m (Arabidopsis thaliana (Mouse-ear cress)).